A 724-amino-acid chain; its full sequence is Probable methyltransferase PMT28 (724 aa).

At 1-22 (MMERKREMGIAYFARRIKQPRG) the chain is on the cytoplasmic side. The chain crosses the membrane as a helical; Signal-anchor for type II membrane protein span at residues 23–43 (IWVKMTFIVVLGLCFVFFWSF). Topologically, residues 44–724 (LSSSASTFNV…LCAQKTLWRP (681 aa)) are lumenal. The interval 63–211 (EPVSSRTKSA…ISKKRKRKGP (149 aa)) is disordered. Basic and acidic residues predominate over residues 71–98 (SAHEVSESSKLHERGKVESGSKSKEGKK). Residues 107-125 (HETKKKKEHAVSHPHKKKD) are compositionally biased toward basic residues. Residues 126–140 (VPKPVVEEVVVKEDQ) show a composition bias toward basic and acidic residues. Residues 141 to 173 (EHEEAESDDSDQSNKEDGEEGTESDGNEGESDG) are compositionally biased toward acidic residues. N-linked (GlcNAc...) asparagine glycans are attached at residues Asn305, Asn316, and Asn568.

Belongs to the methyltransferase superfamily.

Its subcellular location is the golgi apparatus membrane. The polypeptide is Probable methyltransferase PMT28 (Arabidopsis thaliana (Mouse-ear cress)).